The chain runs to 1448 residues: MPYGNSKEIETDFDSITISLASPEDILERSYGEVMKPETINYRSFKPEMGGLFCEKIFGPVKDYECHCGKYKRIRYKGIICDRCGVEVTRKAVRRERMGHISLSVPVVHIWYFKTLPNKIGHLLGLKSKDLEKVIYYENYIVIQPGTAERLGVEENQLLTEEEYYEILYQIRDDNNRLQDDNEEKFIAKIGGEAVETMLERLELDKLAQELRYQVRTETSQQRKSKALKRLDVVEAFREANEDGTNKPEWMVMRVIPVIPPELRPLVPLDGGRFATSDLNDLYRRVIIRNNRLKRLIDIKAPEVILRNEKRMLQEAVDSLFDNSRKSNSVRGSSNRPLKSLSDMLKGKQGRFRQNLLGKRVDYSGRSVIVSGPHLELHQCGLPKEMAVELFKPFIIRRLIERGIVKTVKSAKKYVDKKTEDVWDILEKVIQGRPVLLNRAPTLHRLGIQAFQPVLTENKAIEIHPLVCPAYNADFDGDQMAVHVPLSHEACLESMVLMLSSHNVRSPADGGPLAVPSQDMILGLYYITKAKSNQKGEGMRFANVQEVRQAFDQDQVALHAKIQLRDPDGSGEMIDTTVGRVIFNETLPDTLDYVNEVLSTKNVRPVIARVLKQTGFEETADFLDAIKDMGFRRSTTSGMTFSLSDIIIPDEKEELIEEANETVEEAEQNYSMGFITDNERYNQVIDVWTKTNNKVSEVLFDALKEHKEGFNPIFTMADSGARGSQEQIRQLGGMRGLMAKPQKNIGEGGGGGEILENPILSNFKEGLTVQEYFISTHGSRKGLADTALKTADAGYLTRRLVDVSQSVTVTEHDCGTLRGINVGALKDNEEVVAPLSDRITGRVSVRDVYDPHTDELIVEANELITDEIADDIAQTSIEEIEIRSVLTCEAERGVCTLCYGQNLATGRMVEVGESVGVVAAQSIGEPGTQLTLRTFHTGGTATREVGESTIQAKFAGTLEFENLRTVTYEDTDGPKEVVLSRQGEVRIMDTDGDRRELTSYVVPYGAELLVDEGEDVEDGDVLASWDPYNSLILTEANGTVRFEDIIEDTTYREETDEQTGHKEKVIVESRERTLTPAVIVETEDGEQREYNMPVDARIQVDEGDEVQAGQTLAKMPRQAAQTSDITGGLPRVEELFEARTPDEPAVVSEIDGIVSFGDQKRGSQEVIVTSRDGDMEKSYMVSLSKHMLVHEGDYVEAGDRLCDGQIAPHDILSIKGPRAVQEHLLNEVQEVYRLQGVDIDDKHFEVVIRQMMKRVKITEPGDTNFLEEDQVDRQKMASINDDLYDKFVVKDPSDANVEIGEVIGRRRLRELNSELKREDKPEIEVREARPAVGEPLLLGITKASLATDSMISAASFQETTKVLTNSAIRSRTDPLEGLKENVVAGHSIPAGTGQREYRDLVVGSKSELEELQAAIGGDGESPSGDGAAGDGAPSEEDVEQIEASGSEN.

Positions 66, 68, 81, and 84 each coordinate Zn(2+). Positions 474, 476, and 478 each coordinate Mg(2+). The Zn(2+) site is built by cysteine 814, cysteine 888, cysteine 895, and cysteine 898. Residues 1408 to 1448 (LEELQAAIGGDGESPSGDGAAGDGAPSEEDVEQIEASGSEN) are disordered.

It belongs to the RNA polymerase beta' chain family. In terms of assembly, the RNAP catalytic core consists of 2 alpha, 1 beta, 1 beta' and 1 omega subunit. When a sigma factor is associated with the core the holoenzyme is formed, which can initiate transcription. Mg(2+) is required as a cofactor. Zn(2+) serves as cofactor.

The enzyme catalyses RNA(n) + a ribonucleoside 5'-triphosphate = RNA(n+1) + diphosphate. DNA-dependent RNA polymerase catalyzes the transcription of DNA into RNA using the four ribonucleoside triphosphates as substrates. The chain is DNA-directed RNA polymerase subunit beta' from Salinibacter ruber (strain DSM 13855 / M31).